The sequence spans 347 residues: Quinolinate synthase (347 aa).

The iminosuccinate site is built by histidine 47 and serine 68. Cysteine 113 contributes to the [4Fe-4S] cluster binding site. Residues 139–141 (YAN) and serine 156 each bind iminosuccinate. Position 200 (cysteine 200) interacts with [4Fe-4S] cluster. Residues 226-228 (HPE) and threonine 243 contribute to the iminosuccinate site. [4Fe-4S] cluster is bound at residue cysteine 297.

This sequence belongs to the quinolinate synthase family. Type 1 subfamily. [4Fe-4S] cluster is required as a cofactor.

It localises to the cytoplasm. The catalysed reaction is iminosuccinate + dihydroxyacetone phosphate = quinolinate + phosphate + 2 H2O + H(+). It functions in the pathway cofactor biosynthesis; NAD(+) biosynthesis; quinolinate from iminoaspartate: step 1/1. Catalyzes the condensation of iminoaspartate with dihydroxyacetone phosphate to form quinolinate. The polypeptide is Quinolinate synthase (Salmonella agona (strain SL483)).